The sequence spans 421 residues: Membrane-associated protein UidC (421 aa).

The first 23 residues, 1–23, serve as a signal peptide directing secretion; it reads MRKIVAMAVICLTAASGLTSAYA.

The protein belongs to the outer membrane porin (Opr) (TC 1.B.25) family.

The protein localises to the cell outer membrane. Functionally, enhances the activity of the UidB (GusB) glucuronide transporter, on its own however it has no transport activity. Glucuronide transport does not occur in strain K12 due to a variant at position 100 of the UidB (GusB, AC P0CE44, AC P0CE45) protein. The polypeptide is Membrane-associated protein UidC (uidC) (Escherichia coli (strain K12)).